The sequence spans 300 residues: Cation-efflux pump FieF (300 aa).

4 helical membrane-spanning segments follow: residues 12–32 (AALS…FAWW), 40–60 (LAAL…LFVV), 82–102 (AALA…LTGF), and 114–134 (PSIG…LVTF). Zn(2+)-binding residues include Asp45 and Asp49. Zn(2+) contacts are provided by His153 and Asp157. Transmembrane regions (helical) follow at residues 155 to 175 (QSDV…WYGF) and 178 to 198 (ADAL…LRMG).

It belongs to the cation diffusion facilitator (CDF) transporter (TC 2.A.4) family. FieF subfamily. Homodimer.

It localises to the cell inner membrane. The catalysed reaction is Zn(2+)(in) + H(+)(out) = Zn(2+)(out) + H(+)(in). The enzyme catalyses Cd(2+)(in) + H(+)(out) = Cd(2+)(out) + H(+)(in). It carries out the reaction Fe(2+)(in) + H(+)(out) = Fe(2+)(out) + H(+)(in). Divalent metal cation transporter which exports Zn(2+), Cd(2+) and possibly Fe(2+). May be involved in zinc and iron detoxification by efflux. This is Cation-efflux pump FieF from Yersinia pestis bv. Antiqua (strain Antiqua).